The sequence spans 218 residues: Ribose-5-phosphate isomerase A (218 aa).

Residues 28–31, 81–84, and 94–97 contribute to the substrate site; these read TGST, DGAD, and KGGG. Glu103 serves as the catalytic Proton acceptor. Lys121 is a binding site for substrate.

It belongs to the ribose 5-phosphate isomerase family. In terms of assembly, homodimer.

It carries out the reaction aldehydo-D-ribose 5-phosphate = D-ribulose 5-phosphate. It participates in carbohydrate degradation; pentose phosphate pathway; D-ribose 5-phosphate from D-ribulose 5-phosphate (non-oxidative stage): step 1/1. Catalyzes the reversible conversion of ribose-5-phosphate to ribulose 5-phosphate. This is Ribose-5-phosphate isomerase A from Proteus mirabilis (strain HI4320).